Reading from the N-terminus, the 87-residue chain is Conotoxin Bt15a (87 aa).

Positions methionine 1–serine 23 are cleaved as a signal peptide. Residues aspartate 24–arginine 49 constitute a propeptide that is removed on maturation. Glutamine 50 carries the post-translational modification Pyrrolidone carboxylic acid.

It belongs to the conotoxin O2 superfamily. Post-translationally, contains 4 disulfide bonds. Expressed by the venom duct.

It is found in the secreted. The protein is Conotoxin Bt15a of Conus betulinus (Beech cone).